The chain runs to 288 residues: Energy-coupling factor transporter ATP-binding protein EcfA2 (288 aa).

An ABC transporter domain is found at I3–S246. Residue G40–S47 coordinates ATP.

It belongs to the ABC transporter superfamily. Energy-coupling factor EcfA family. As to quaternary structure, forms a stable energy-coupling factor (ECF) transporter complex composed of 2 membrane-embedded substrate-binding proteins (S component), 2 ATP-binding proteins (A component) and 2 transmembrane proteins (T component).

It localises to the cell membrane. Its function is as follows. ATP-binding (A) component of a common energy-coupling factor (ECF) ABC-transporter complex. Unlike classic ABC transporters this ECF transporter provides the energy necessary to transport a number of different substrates. In Listeria monocytogenes serovar 1/2a (strain ATCC BAA-679 / EGD-e), this protein is Energy-coupling factor transporter ATP-binding protein EcfA2.